The sequence spans 525 residues: D-3-phosphoglycerate dehydrogenase (525 aa).

Residues 148 to 149, aspartate 168, threonine 200, 227 to 229, and aspartate 253 contribute to the NAD(+) site; these read RI and CAR. Residue arginine 229 is part of the active site. Glutamate 258 is an active-site residue. The active-site Proton donor is the histidine 276. NAD(+) is bound at residue 276-279; the sequence is HLGA. Residues 452–524 form the ACT domain; it reads LVYIQHQDTT…DIVSVKLIDL (73 aa).

It belongs to the D-isomer specific 2-hydroxyacid dehydrogenase family.

The catalysed reaction is (2R)-3-phosphoglycerate + NAD(+) = 3-phosphooxypyruvate + NADH + H(+). It catalyses the reaction (R)-2-hydroxyglutarate + NAD(+) = 2-oxoglutarate + NADH + H(+). It functions in the pathway amino-acid biosynthesis; L-serine biosynthesis; L-serine from 3-phospho-D-glycerate: step 1/3. With respect to regulation, in bacteria displays feedback inhibition by L-serine. Catalyzes the reversible oxidation of 3-phospho-D-glycerate to 3-phosphonooxypyruvate, the first step of the phosphorylated L-serine biosynthesis pathway. Also catalyzes the reversible oxidation of 2-hydroxyglutarate to 2-oxoglutarate. In Bacillus subtilis (strain 168), this protein is D-3-phosphoglycerate dehydrogenase (serA).